Consider the following 91-residue polypeptide: Probable Thioredoxin (91 aa).

Residues 1–91 (MVMMKLFTSP…LKGGEEYGAS (91 aa)) form the Glutaredoxin domain. Residues Cys12 and Cys15 are joined by a disulfide bond.

The protein belongs to the glutaredoxin family.

The protein resides in the cytoplasm. Functionally, acts to maintain redox homeostasis; functions as a protein disulfide reductase. The chain is Probable Thioredoxin from Archaeoglobus fulgidus (strain ATCC 49558 / DSM 4304 / JCM 9628 / NBRC 100126 / VC-16).